The sequence spans 314 residues: Serine/threonine-protein phosphatase PP2A-4 catalytic subunit (314 aa).

Mn(2+)-binding residues include D62, H64, D90, and N122. The Proton donor role is filled by H123. 2 residues coordinate Mn(2+): H172 and H246.

The protein belongs to the PPP phosphatase family. PP-2A subfamily. Mn(2+) serves as cofactor.

The protein resides in the cytoplasm. The catalysed reaction is O-phospho-L-seryl-[protein] + H2O = L-seryl-[protein] + phosphate. It carries out the reaction O-phospho-L-threonyl-[protein] + H2O = L-threonyl-[protein] + phosphate. The polypeptide is Serine/threonine-protein phosphatase PP2A-4 catalytic subunit (PP2A4) (Oryza sativa subsp. japonica (Rice)).